Here is a 260-residue protein sequence, read N- to C-terminus: Magnesium dechelatase SGRL, chloroplastic (260 aa).

The transit peptide at 1–45 (MACYIVPYYHHPVLSHPNREIFSHRHHHHHRFCNNLLNRRISVPR) directs the protein to the chloroplast.

This sequence belongs to the staygreen family. Interacts with the light harvesting complex II (LHCII). Interacts with the chlorophyll catabolic enzymes (CCEs) NYC1, NOL, PAO and RCCR. Expressed in cotyledons, pollen and young leaves.

It is found in the plastid. The protein resides in the chloroplast thylakoid. It carries out the reaction chlorophyllide a + 2 H(+) = pheophorbide a + Mg(2+). In terms of biological role, magnesium chelatase involved in chlorophyll a degradation in the chlorophyll-protein complexes of photosystem I (PSI) and photosystem II (PSII). Contributes to the degradation of PSI and PSII in the thylakoid membranes. Recombinant SGRL possesses high dechelating activity against chlorophyllide a, very low activity against chlorophyll a, and no activity against chlorophyll b. Contributes to abiotic stress-induced chlorophyll degradation and leaf yellowing during vegetative plant growth. This Arabidopsis thaliana (Mouse-ear cress) protein is Magnesium dechelatase SGRL, chloroplastic.